We begin with the raw amino-acid sequence, 578 residues long: Paraneoplastic antigen Ma6F (578 aa).

Disordered regions lie at residues 106 to 221 (AQPQ…AGAA) and 441 to 578 (AAPV…PPGK). Over residues 112–129 (AVARGAGEAGAAGEAGSV) the composition is skewed to low complexity. A compositionally biased stretch (gly residues) spans 147 to 159 (GGIGEAGGVGEAG). A compositionally biased stretch (low complexity) spans 160 to 173 (AAGEAGAAGEAGAA). Residues 174–211 (GEAGGAGEAGGAGEAGGAGEEGGTGEEGGAGEAGGAGE) show a composition bias toward gly residues. A compositionally biased stretch (low complexity) spans 449 to 461 (PAAAQASPAQGDA). Acidic residues-rich tracts occupy residues 462–473 (SEADPGAEDADE) and 556–566 (EESENEDEDGA).

This chain is Paraneoplastic antigen Ma6F, found in Homo sapiens (Human).